A 236-amino-acid polypeptide reads, in one-letter code: UPF0177 protein YaiH (236 aa).

6 helical membrane-spanning segments follow: residues 16–36, 51–71, 90–110, 131–151, 180–200, and 210–230; these read YFSL…ILGY, ATAT…GILI, ILFL…TFTY, IVFP…FEEA, TGAN…TLIY, and ILVH…LQTI.

Belongs to the UPF0177 family.

It localises to the cell membrane. The sequence is that of UPF0177 protein YaiH (yaiH) from Lactococcus lactis subsp. lactis (strain IL1403) (Streptococcus lactis).